The chain runs to 267 residues: Glutamate 5-kinase (267 aa).

Lys-17 lines the ATP pocket. Ser-57, Asp-144, and Asn-156 together coordinate substrate. Residues 176-177 (SD) and 218-224 (TGGMATK) contribute to the ATP site.

This sequence belongs to the glutamate 5-kinase family.

It localises to the cytoplasm. It catalyses the reaction L-glutamate + ATP = L-glutamyl 5-phosphate + ADP. Its pathway is amino-acid biosynthesis; L-proline biosynthesis; L-glutamate 5-semialdehyde from L-glutamate: step 1/2. Functionally, catalyzes the transfer of a phosphate group to glutamate to form L-glutamate 5-phosphate. The sequence is that of Glutamate 5-kinase from Clostridium acetobutylicum (strain ATCC 824 / DSM 792 / JCM 1419 / IAM 19013 / LMG 5710 / NBRC 13948 / NRRL B-527 / VKM B-1787 / 2291 / W).